The following is a 155-amino-acid chain: UPF0303 protein lp_3613 (155 aa).

Belongs to the UPF0303 family.

The chain is UPF0303 protein lp_3613 from Lactiplantibacillus plantarum (strain ATCC BAA-793 / NCIMB 8826 / WCFS1) (Lactobacillus plantarum).